The following is a 1813-amino-acid chain: Sucrase-isomaltase, intestinal (1813 aa).

Topologically, residues 1–12 (MARKKSSGLKIT) are cytoplasmic. A Phosphoserine; by PKA modification is found at serine 7. A helical; Signal-anchor for type II membrane protein membrane pass occupies residues 13 to 32 (LIVLLAIVTIIAIALVAILP). Over 33–1813 (TKTPAVELVS…LDEPIEISWT (1781 aa)) the chain is Lumenal. Residues 46 to 95 (GKCPSAENDRLDEKINCIPDQFPTQALCAMQGCCWNPRNESPTPWCSFAN) enclose the P-type 1 domain. Disulfide bonds link cysteine 48-cysteine 79, cysteine 62-cysteine 78, and cysteine 73-cysteine 91. The interval 95-991 (NNHGYEFEKI…DLELNTATAR (897 aa)) is isomaltase. Asparagine 127 carries an N-linked (GlcNAc...) asparagine glycan. The substrate site is built by aspartate 250 and aspartate 374. Residue tyrosine 377 is modified to Sulfotyrosine. A glycan (N-linked (GlcNAc...) asparagine) is linked at asparagine 388. The active-site Nucleophile; for isomaltase activity is aspartate 491. A disulfide bridge links cysteine 506 with cysteine 531. Residue arginine 574 coordinates substrate. Aspartate 590 acts as the For isomaltase activity in catalysis. The cysteines at positions 621 and 632 are disulfide-linked. Histidine 648 contacts substrate. Asparagine 669, asparagine 791, asparagine 896, and asparagine 911 each carry an N-linked (GlcNAc...) asparagine glycan. The 46-residue stretch at 917–962 (NQVSLDSEKIDCFPDNNPENKQNCEERGCLWEPNSAAEGPRCYFPK) folds into the P-type 2 domain. The interval 992 to 1813 (IKMPSNPISV…LDEPIEISWT (822 aa)) is sucrase. N-linked (GlcNAc...) asparagine glycans are attached at residues asparagine 1221 and asparagine 1289. The residue at position 1294 (tyrosine 1294) is a Sulfotyrosine. Asparagine 1326 and asparagine 1340 each carry an N-linked (GlcNAc...) asparagine glycan. Tyrosine 1368 and tyrosine 1371 each carry sulfotyrosine. Aspartate 1380 (nucleophile; for sucrase activity) is an active-site residue. The active-site For sucrase activity is the glutamate 1383. Asparagine 1432 is a glycosylation site (N-linked (GlcNAc...) asparagine). Residue aspartate 1486 is the Proton donor; for sucrase activity of the active site. N-linked (GlcNAc...) asparagine glycans are attached at residues asparagine 1521, asparagine 1545, asparagine 1558, asparagine 1703, and asparagine 1772.

Belongs to the glycosyl hydrolase 31 family. As to quaternary structure, the resulting sucrase and isomaltase subunits stay associated with one another in a complex by non-covalent linkages. Post-translationally, the precursor is proteolytically cleaved when exposed to pancreatic proteases in the intestinal lumen. Sulfated.

The protein localises to the apical cell membrane. It carries out the reaction Hydrolysis of sucrose and maltose by an alpha-D-glucosidase-type action.. The catalysed reaction is Hydrolysis of (1-&gt;6)-alpha-D-glucosidic linkages in some oligosaccharides produced from starch and glycogen by alpha-amylase, and in isomaltose.. Plays an important role in the final stage of carbohydrate digestion. Isomaltase activity is specific for both alpha-1,4- and alpha-1,6-oligosaccharides. The sequence is that of Sucrase-isomaltase, intestinal (SI) from Suncus murinus (Asian house shrew).